A 409-amino-acid chain; its full sequence is Probable tRNA N6-adenosine threonylcarbamoyltransferase, mitochondrial (409 aa).

The N-terminal 31 residues, 1–31 (MHALRNFAGNGIANVFGCGIRRRLSYVLGIE), are a transit peptide targeting the mitochondrion. A divalent metal cation is bound by residues His135 and His139. Substrate contacts are provided by residues 159 to 163 (LASGG), Asp192, Gly212, Glu216, 322 to 323 (NN), and Ser350. A divalent metal cation is bound at residue Asp351.

Belongs to the KAE1 / TsaD family. In terms of assembly, homodimer. The cofactor is a divalent metal cation.

The protein resides in the mitochondrion. The enzyme catalyses L-threonylcarbamoyladenylate + adenosine(37) in tRNA = N(6)-L-threonylcarbamoyladenosine(37) in tRNA + AMP + H(+). In terms of biological role, required for the formation of a threonylcarbamoyl group on adenosine at position 37 (t(6)A37) in mitochondrial tRNAs that read codons beginning with adenine. Probably involved in the transfer of the threonylcarbamoyl moiety of threonylcarbamoyl-AMP (TC-AMP) to the N6 group of A37. Involved in mitochondrial genome maintenance. This is Probable tRNA N6-adenosine threonylcarbamoyltransferase, mitochondrial from Drosophila melanogaster (Fruit fly).